The sequence spans 355 residues: Peptide chain release factor 1 (355 aa).

Gln-231 carries the N5-methylglutamine modification. Positions 283–292 (IAKETSERKS) are enriched in basic and acidic residues. The disordered stretch occupies residues 283–303 (IAKETSERKSQVGTGDRSGRI).

The protein belongs to the prokaryotic/mitochondrial release factor family. In terms of processing, methylated by PrmC. Methylation increases the termination efficiency of RF1.

It is found in the cytoplasm. Peptide chain release factor 1 directs the termination of translation in response to the peptide chain termination codons UAG and UAA. This Campylobacter curvus (strain 525.92) protein is Peptide chain release factor 1.